The primary structure comprises 744 residues: Tripartite motif-containing protein 2 (744 aa).

Serine 10 is modified (phosphoserine). Residues 23–64 form an RING-type zinc finger; sequence CSICLERYKNPKVLPCLHTFCERCLQNYIPAHSLTLSCPVCR. The segment at 113–154 adopts a B box-type zinc-finger fold; the sequence is GKPLSCPNHDGNVMDFYCQSCETAMCRECTEGEHAEHPTVPL. Zn(2+)-binding residues include cysteine 118, histidine 121, cysteine 141, and histidine 146. A Filamin repeat occupies 320-421; the sequence is TTNAVASETV…IRGSPFKLKV (102 aa). Threonine 371 bears the Phosphothreonine mark. 3 positions are modified to phosphoserine: serine 375, serine 424, and serine 428. The segment at 432–462 is disordered; that stretch reads EGVKRRVKSPGSGHVKQKAVKRPASMYSTGK. 6 NHL repeats span residues 473-516, 520-563, 564-605, 609-652, 656-699, and 700-743; these read IFRV…FSND, KSRF…FSSD, GKFK…FQPN, VTRF…FNQE, MLKF…FDGS, and GSFL…YRYL.

It belongs to the TRIM/RBCC family. In terms of assembly, forms homooligomers. Interacts with TRIM3; this interaction reduces TRIM2 activity. Interacts with myosin V; myosin V may not be a substrate for ubiquitination. Interacts with NEFL. Interacts with phosphorylated BCL2L11. Interacts with SIRPA. RING-type zinc finger-dependent and UBE2D1-dependent autoubiquitination.

It is found in the cytoplasm. The catalysed reaction is S-ubiquitinyl-[E2 ubiquitin-conjugating enzyme]-L-cysteine + [acceptor protein]-L-lysine = [E2 ubiquitin-conjugating enzyme]-L-cysteine + N(6)-ubiquitinyl-[acceptor protein]-L-lysine.. Its pathway is protein modification; protein ubiquitination. Its function is as follows. UBE2D1-dependent E3 ubiquitin-protein ligase that mediates the ubiquitination of NEFL and of phosphorylated BCL2L11. Plays a neuroprotective function. May play a role in neuronal rapid ischemic tolerance. Plays a role in antiviral immunity and limits New World arenavirus infection independently of its ubiquitin ligase activity. This chain is Tripartite motif-containing protein 2 (TRIM2), found in Bos taurus (Bovine).